The primary structure comprises 500 residues: Maturase K (500 aa).

The protein belongs to the intron maturase 2 family. MatK subfamily.

The protein resides in the plastid. It is found in the chloroplast. Its function is as follows. Usually encoded in the trnK tRNA gene intron. Probably assists in splicing its own and other chloroplast group II introns. This chain is Maturase K, found in Helianthus annuus (Common sunflower).